We begin with the raw amino-acid sequence, 203 residues long: Octanoyltransferase (203 aa).

The 174-residue stretch at 30-203 (EDQDNYFFIT…HIIKEGRKLV (174 aa)) folds into the BPL/LPL catalytic domain. Residues 69–76 (RGGSVTFH), 135–137 (SVG), and 148–150 (GIS) contribute to the substrate site. Cysteine 166 functions as the Acyl-thioester intermediate in the catalytic mechanism.

The protein belongs to the LipB family.

The protein localises to the cytoplasm. It catalyses the reaction octanoyl-[ACP] + L-lysyl-[protein] = N(6)-octanoyl-L-lysyl-[protein] + holo-[ACP] + H(+). Its pathway is protein modification; protein lipoylation via endogenous pathway; protein N(6)-(lipoyl)lysine from octanoyl-[acyl-carrier-protein]: step 1/2. In terms of biological role, catalyzes the transfer of endogenously produced octanoic acid from octanoyl-acyl-carrier-protein onto the lipoyl domains of lipoate-dependent enzymes. Lipoyl-ACP can also act as a substrate although octanoyl-ACP is likely to be the physiological substrate. In Persephonella marina (strain DSM 14350 / EX-H1), this protein is Octanoyltransferase.